Consider the following 365-residue polypeptide: Homeobox protein Nkx-6.1 (365 aa).

A disordered region spans residues 35-136 (LYPAAYPPLP…SSSSASATSA (102 aa)). Composition is skewed to low complexity over residues 48-59 (PSSSSSSSSSSS), 69-92 (PGGL…QLSA), and 110-136 (ASGA…ATSA). The repressor domain stretch occupies residues 102 to 269 (LSRPSMPVAS…KYLAGPERAR (168 aa)). Arginine 190 bears the Asymmetric dimethylarginine mark. The homeobox DNA-binding region spans 237-296 (RKHTRPTFSGQQIFALEKTFEQTKYLAGPERARLAYSLGMTESQVKVWFQNRRTKWRKKH). Residues 295–365 (KHAAEMATAK…LHASEAEGSS (71 aa)) are disordered. Over residues 305–318 (KKQDSETERLKGTS) the composition is skewed to basic and acidic residues. Residues 307–365 (QDSETERLKGTSENEEDDDDYNKPLDPNSDDEKITQLLKKHKSSGGSLLLHASEAEGSS) form an involved in DNA-binding region.

As to expression, pancreatic beta cells.

It is found in the nucleus. Its function is as follows. Transcription factor which binds to specific A/T-rich DNA sequences in the promoter regions of a number of genes. Involved in the development of insulin-producing beta cells in the islets of Langerhans at the secondary transition. Together with NKX2-2 and IRX3 acts to restrict the generation of motor neurons to the appropriate region of the neural tube. Belongs to the class II proteins of neuronal progenitor factors, which are induced by SHH signals. The chain is Homeobox protein Nkx-6.1 (Nkx6-1) from Rattus norvegicus (Rat).